Consider the following 82-residue polypeptide: Small ribosomal subunit protein bS16 (82 aa).

This sequence belongs to the bacterial ribosomal protein bS16 family.

The sequence is that of Small ribosomal subunit protein bS16 from Photorhabdus laumondii subsp. laumondii (strain DSM 15139 / CIP 105565 / TT01) (Photorhabdus luminescens subsp. laumondii).